The chain runs to 397 residues: Purine ribonucleoside efflux pump NepI (397 aa).

Residues 1-21 (MNENIAEKFRADGVARPNWSA) lie on the Cytoplasmic side of the membrane. Residues 22-42 (VFAVAFCVACLITVEFLPVSL) form a helical membrane-spanning segment. At 43-54 (LTPMAQDLGISE) the chain is on the periplasmic side. A helical transmembrane segment spans residues 55–75 (GVAGQSVTVTAFVAMFSSLFI). At 76-85 (TQIIQATDRR) the chain is on the cytoplasmic side. The chain crosses the membrane as a helical span at residues 86-106 (YIVILFAVLLTASCLMVSFAN). Ser107 is a topological domain (periplasmic). Residues 108 to 128 (FTLLLLGRACLGLALGGFWAM) traverse the membrane as a helical segment. Topologically, residues 129 to 147 (SASLTMRLVPARTVPKALS) are cytoplasmic. The chain crosses the membrane as a helical span at residues 148–168 (VIFGAVSIALVIAAPLGSFLG). Topologically, residues 169–175 (GIIGWRN) are periplasmic. A helical membrane pass occupies residues 176–196 (VFNAAAVMGVLCVIWVVKSLP). Residues 197-215 (SLPGEPSHQKQNMFSLLQR) lie on the Cytoplasmic side of the membrane. The helical transmembrane segment at 216 to 236 (PGVMAGMIAIFMSFAGQFAFF) threads the bilayer. Residues 237–255 (TYIRPVYMNLAGFDVDGLT) lie on the Periplasmic side of the membrane. The chain crosses the membrane as a helical span at residues 256–276 (LVLLSFGIASFVGTSFSSYVL). Over 277 to 281 (KRSVK) the chain is Cytoplasmic. The chain crosses the membrane as a helical span at residues 282–302 (LALAGAPLLLALSALTLIVWG). Residues 303–305 (SDK) lie on the Periplasmic side of the membrane. A helical membrane pass occupies residues 306–326 (TVAAAIAIIWGLAFALVPVGW). At 327 to 343 (STWITRSLADQAEKAGS) the chain is on the cytoplasmic side. A helical membrane pass occupies residues 344–364 (IQVAVIQLANTCGAAVGGYAL). Over 365 to 366 (DN) the chain is Periplasmic. A helical transmembrane segment spans residues 367 to 387 (FGLLSPLALSGGLMLLTALVV). At 388 to 397 (AAKVRITPMS) the chain is on the cytoplasmic side.

It belongs to the major facilitator superfamily. DHA1 family. NepI (TC 2.A.1.2.26) subfamily.

The protein resides in the cell inner membrane. It catalyses the reaction inosine(in) + H(+)(out) = inosine(out) + H(+)(in). The enzyme catalyses guanosine(in) + H(+)(out) = guanosine(out) + H(+)(in). Involved in the efflux of purine ribonucleosides, such as inosine and guanosine. The polypeptide is Purine ribonucleoside efflux pump NepI (Salmonella choleraesuis (strain SC-B67)).